We begin with the raw amino-acid sequence, 723 residues long: FACT complex subunit Ssrp1 (723 aa).

Ser443 is subject to Phosphoserine. Disordered stretches follow at residues 459–564 (EARE…AFML) and 586–723 (AKKG…EASD). 2 stretches are compositionally biased toward acidic residues: residues 464–478 (EEDD…ESTD) and 486–507 (NESD…DDSD). Over residues 531–557 (KKEKKHKEKERTKKPSKKKKDSGKPKR) the composition is skewed to basic residues. Residues 555-621 (PKRATTAFML…RYHDEMRNYK (67 aa)) constitute a DNA-binding region (HMG box). Over residues 586 to 621 (AKKGGEMWKELKDKSKWEDAAAKDKQRYHDEMRNYK) the composition is skewed to basic and acidic residues. The residue at position 628 (Ser628) is a Phosphoserine. The segment covering 644–656 (PSPSKKANTSGSG) has biased composition (polar residues). Phosphoserine is present on residues Ser664 and Ser668. Residues 664–676 (SDDDSTSSDDEKD) show a composition bias toward acidic residues. The residue at position 669 (Thr669) is a Phosphothreonine. 2 positions are modified to phosphoserine: Ser670 and Ser671. The span at 677 to 692 (NEPAKKKSKPPSDGDA) shows a compositional bias: basic and acidic residues. Positions 702–723 (EPEESEEDSNASDEDEEDEASD) are enriched in acidic residues.

It belongs to the SSRP1 family. As to quaternary structure, component of the FACT complex, a stable heterodimer of dre4/spt16 and Ssrp. Interacts with CHD1 and TRL/GAGA. As to expression, expressed at highest levels in nurse cells of the ovary.

The protein resides in the nucleus. It is found in the chromosome. It localises to the nucleolus. In terms of biological role, component of the FACT complex, a general chromatin factor that acts to reorganize nucleosomes. The FACT complex is involved in multiple processes that require DNA as a template such as mRNA elongation, DNA replication and DNA repair. During transcription elongation the FACT complex acts as a histone chaperone that both destabilizes and restores nucleosomal structure. It facilitates the passage of RNA polymerase II and transcription by promoting the dissociation of one histone H2A-H2B dimer from the nucleosome, then subsequently promotes the reestablishment of the nucleosome following the passage of RNA polymerase II. Binds specifically to single-stranded DNA and RNA with highest affinity for nucleotides G and U. The FACT complex is required for expression of Hox genes. The protein is FACT complex subunit Ssrp1 (Ssrp) of Drosophila melanogaster (Fruit fly).